Reading from the N-terminus, the 1337-residue chain is C-Jun-amino-terminal kinase-interacting protein 3 (1337 aa).

The RH1 domain occupies 12-100 (VVVYQDDYCS…LTQYEREKAL (89 aa)). Residues 50-80 (EVVKELMPLVVNVLENLDSVLSENQEHEVEL) are kinesin-binding domain (KBD); essential for its function in axon elongation. Residues 58–177 (LVVNVLENLD…HTEMIQTYVE (120 aa)) are a coiled coil. Disordered stretches follow at residues 183 to 211 (KMQQVGGSGQTESSLPGRSRKERPTSLNV) and 245 to 285 (SSSY…PSAA). A compositionally biased stretch (polar residues) spans 184–198 (MQQVGGSGQTESSLP). The interval 210–226 (NVFPLADGMVRAQMGGK) is JNK-binding domain (JBD); essential for its function in axon elongation. The span at 261-270 (SSAAATPSTT) shows a compositional bias: low complexity. Residues Thr266, Thr276, and Thr287 each carry the phosphothreonine; by MAPK modification. Polar residues predominate over residues 271–282 (GTKSNTPTSSVP). 2 positions are modified to phosphoserine; by ROCK1: Ser315 and Ser365. Ser366 carries the post-translational modification Phosphoserine. A leucine zipper-like domain (LZ); essential for its function in axon elongation region spans residues 424-459 (LLLENSQLLETKNALNVVKNDLIAKVDQLSGEQEVL). A coiled-coil region spans residues 437–555 (ALNVVKNDLI…LQEAVRWTEM (119 aa)). The interaction with NTRK2 stretch occupies residues 459–515 (LKGELEAAKQAKVKLENRIKELEEELKRVKSEAVTARREPREEVEDVSSYLCTELDK). The RH2 domain maps to 521–595 (RRRFTRVEMA…SPPPAKRSYP (75 aa)). Residue Ser603 is modified to Phosphoserine. Residues 633–655 (DDCTSSARREQKREQYRQVREHV) form a disordered region. Over residues 639-655 (ARREQKREQYRQVREHV) the composition is skewed to basic and acidic residues. Ser677 bears the Phosphoserine mark. 2 disordered regions span residues 719 to 772 (WKPH…ATSS) and 859 to 966 (PRSN…TTTS). Residues 739–765 (LTCDREGEGEPKSTHPSPEKKKAKETP) show a composition bias toward basic and acidic residues. Polar residues-rich tracts occupy residues 879–892 (VATTANGKVNPSQS) and 941–952 (ENGSESNGTIVQ).

Belongs to the JIP scaffold family. As to quaternary structure, forms homo- or heterooligomeric complexes. The central region of MAPK8IP3 interacts with the C-terminal of MAPK8IP2 but not MAPK8IP1. Binds specific components of the JNK signaling pathway namely MAPK8/JNK1, MAPK9/JNK2 and MAPK10/JNK3 to the N-terminal region, MAP2K4/MKK4 and MAP2K7/MKK7 to the central region and MAP3K11 to the C-terminal region. Binds the TPR motif-containing C-terminal of kinesin light chain, KLC1. Pre-assembled MAPK8IP1 scaffolding complexes are then transported as a cargo of kinesin, to the required subcellular location. Interacts with ROCK1 and this interaction is enhanced by ultraviolet-B (UVB) radiation. Interacts with SH3RF2. Interacts with NTRK2/TRKB and NTRK3/TRKC. Phosphorylation by ROCK1 is crucial for the recruitment of JNK. Highly expressed throughout many regions of the brain and at lower levels in the heart, liver, lung, testes and kidney. All isoforms have been identified in the brain, isoform 1a is also expressed in the spleen and lung.

Its subcellular location is the cytoplasm. It is found in the golgi apparatus. The protein resides in the cytoplasmic vesicle. It localises to the cell projection. The protein localises to the growth cone. Its subcellular location is the axon. It is found in the dendrite. The protein resides in the perinuclear region. The JNK-interacting protein (JIP) group of scaffold proteins selectively mediates JNK signaling by aggregating specific components of the MAPK cascade to form a functional JNK signaling module. May function as a regulator of vesicle transport, through interactions with the JNK-signaling components and motor proteins. Promotes neuronal axon elongation in a kinesin- and JNK-dependent manner. Activates cofilin at axon tips via local activation of JNK, thereby regulating filopodial dynamics and enhancing axon elongation. Its binding to kinesin heavy chains (KHC), promotes kinesin-1 motility along microtubules and is essential for axon elongation and regeneration. Regulates cortical neuronal migration by mediating NTRK2/TRKB anterograde axonal transport during brain development. Acts as an adapter that bridges the interaction between NTRK2/TRKB and KLC1 and drives NTRK2/TRKB axonal but not dendritic anterograde transport, which is essential for subsequent BDNF-triggered signaling and filopodia formation. The sequence is that of C-Jun-amino-terminal kinase-interacting protein 3 (Mapk8ip3) from Mus musculus (Mouse).